The following is a 429-amino-acid chain: 3-phosphoshikimate 1-carboxyvinyltransferase (429 aa).

3 residues coordinate 3-phosphoshikimate: lysine 23, serine 24, and arginine 28. A phosphoenolpyruvate-binding site is contributed by lysine 23. Residues glycine 95 and arginine 123 each contribute to the phosphoenolpyruvate site. 3-phosphoshikimate is bound by residues serine 168, glutamine 170, aspartate 316, and lysine 343. Glutamine 170 provides a ligand contact to phosphoenolpyruvate. The active-site Proton acceptor is the aspartate 316. 2 residues coordinate phosphoenolpyruvate: arginine 347 and arginine 389.

It belongs to the EPSP synthase family. In terms of assembly, monomer.

It is found in the cytoplasm. It carries out the reaction 3-phosphoshikimate + phosphoenolpyruvate = 5-O-(1-carboxyvinyl)-3-phosphoshikimate + phosphate. Its pathway is metabolic intermediate biosynthesis; chorismate biosynthesis; chorismate from D-erythrose 4-phosphate and phosphoenolpyruvate: step 6/7. Its function is as follows. Catalyzes the transfer of the enolpyruvyl moiety of phosphoenolpyruvate (PEP) to the 5-hydroxyl of shikimate-3-phosphate (S3P) to produce enolpyruvyl shikimate-3-phosphate and inorganic phosphate. In Bacillus cereus (strain 03BB102), this protein is 3-phosphoshikimate 1-carboxyvinyltransferase.